The following is a 690-amino-acid chain: Eukaryotic translation initiation factor 3 subunit B (690 aa).

Positions 1 to 11 are enriched in basic and acidic residues; it reads MAKKKSEEHSS. Residues 1 to 33 are disordered; sequence MAKKKSEEHSSADANDSDYQEEPNFDDPPNFVD. Residues 15–25 show a composition bias toward acidic residues; it reads NDSDYQEEPNF. The RRM domain maps to 57–141; it reads SVVVVDNIPK…HTFAVNLFTD (85 aa). WD repeat units lie at residues 207 to 246, 293 to 331, 334 to 369, 442 to 484, and 530 to 575; these read TRERFTDTFVKWSPLGTYVVTFHKPGVAIWGGSNFQKIQK, DGMSVLSMFRWSHDDKFVARMGENSIHIYETPSFYLLDL, IKIPGIRGFSWSPTDNVIAYWVEEQNQIPARVTLME, EIRE…KPSL, and PDHF…IKRT. A coiled-coil region spans residues 614 to 645; it reads QKDRLRLTRASKELLEKRSQLRETFMEYRNKR.

Belongs to the eIF-3 subunit B family. In terms of assembly, component of the eukaryotic translation initiation factor 3 (eIF-3) complex. The eIF-3 complex interacts with pix. Interacts with mxt.

It is found in the cytoplasm. Its function is as follows. RNA-binding component of the eukaryotic translation initiation factor 3 (eIF-3) complex, which is involved in protein synthesis of a specialized repertoire of mRNAs and, together with other initiation factors, stimulates binding of mRNA and methionyl-tRNAi to the 40S ribosome. The eIF-3 complex specifically targets and initiates translation of a subset of mRNAs involved in cell proliferation. This Drosophila willistoni (Fruit fly) protein is Eukaryotic translation initiation factor 3 subunit B.